Consider the following 90-residue polypeptide: Small ribosomal subunit protein uS15 (90 aa).

Belongs to the universal ribosomal protein uS15 family. In terms of assembly, part of the 30S ribosomal subunit. Forms a bridge to the 50S subunit in the 70S ribosome, contacting the 23S rRNA.

Its function is as follows. One of the primary rRNA binding proteins, it binds directly to 16S rRNA where it helps nucleate assembly of the platform of the 30S subunit by binding and bridging several RNA helices of the 16S rRNA. Forms an intersubunit bridge (bridge B4) with the 23S rRNA of the 50S subunit in the ribosome. The polypeptide is Small ribosomal subunit protein uS15 (Helicobacter pylori (strain P12)).